The following is a 183-amino-acid chain: Dual-action ribosomal maturation protein DarP (183 aa).

This sequence belongs to the DarP family.

The protein resides in the cytoplasm. Functionally, member of a network of 50S ribosomal subunit biogenesis factors which assembles along the 30S-50S interface, preventing incorrect 23S rRNA structures from forming. Promotes peptidyl transferase center (PTC) maturation. In Escherichia coli O6:H1 (strain CFT073 / ATCC 700928 / UPEC), this protein is Dual-action ribosomal maturation protein DarP.